A 270-amino-acid polypeptide reads, in one-letter code: Putative [LysW]-aminoadipate/[LysW]-glutamate kinase (270 aa).

Substrate contacts are provided by residues 42-43, R69, and N177; that span reads GG.

The protein belongs to the acetylglutamate kinase family. LysZ subfamily.

It localises to the cytoplasm. It catalyses the reaction [amino-group carrier protein]-C-terminal-N-(1,4-dicarboxybutan-1-yl)-L-glutamine + ATP = [amino-group carrier protein]-C-terminal-N-(1-carboxy-5-phosphooxy-5-oxopentan-1-yl)-L-glutamine + ADP. It carries out the reaction [amino-group carrier protein]-C-terminal-gamma-(L-glutamyl)-L-glutamate + ATP = [amino-group carrier protein]-C-terminal-gamma-(5-phospho-L-glutamyl)-L-glutamate + ADP. The protein operates within amino-acid biosynthesis; L-lysine biosynthesis via AAA pathway; L-lysine from L-alpha-aminoadipate (Thermus route): step 2/5. It functions in the pathway amino-acid biosynthesis; L-arginine biosynthesis. Functionally, involved in both the arginine and lysine biosynthetic pathways. Phosphorylates the LysW-bound precursors glutamate (for arginine biosynthesis), respectively alpha-aminoadipate (for lysine biosynthesis). This is Putative [LysW]-aminoadipate/[LysW]-glutamate kinase from Aeropyrum pernix (strain ATCC 700893 / DSM 11879 / JCM 9820 / NBRC 100138 / K1).